A 205-amino-acid polypeptide reads, in one-letter code: Iron-sulfur assembly protein 2 (205 aa).

C131, C196, and C198 together coordinate Fe cation.

It belongs to the HesB/IscA family.

The protein resides in the mitochondrion matrix. Functionally, involved in the assembly of mitochondrial and cytoplasmic iron-sulfur proteins. Probably involved in the binding of an intermediate of Fe/S cluster assembly. In Schizosaccharomyces pombe (strain 972 / ATCC 24843) (Fission yeast), this protein is Iron-sulfur assembly protein 2 (isa2).